A 184-amino-acid polypeptide reads, in one-letter code: ATP synthase subunit b, chloroplastic (184 aa).

The helical transmembrane segment at 27-49 threads the bilayer; the sequence is LATNPINLSVVLGVLIFFGKGVL.

This sequence belongs to the ATPase B chain family. As to quaternary structure, F-type ATPases have 2 components, F(1) - the catalytic core - and F(0) - the membrane proton channel. F(1) has five subunits: alpha(3), beta(3), gamma(1), delta(1), epsilon(1). F(0) has four main subunits: a(1), b(1), b'(1) and c(10-14). The alpha and beta chains form an alternating ring which encloses part of the gamma chain. F(1) is attached to F(0) by a central stalk formed by the gamma and epsilon chains, while a peripheral stalk is formed by the delta, b and b' chains.

It localises to the plastid. Its subcellular location is the chloroplast thylakoid membrane. Functionally, f(1)F(0) ATP synthase produces ATP from ADP in the presence of a proton or sodium gradient. F-type ATPases consist of two structural domains, F(1) containing the extramembraneous catalytic core and F(0) containing the membrane proton channel, linked together by a central stalk and a peripheral stalk. During catalysis, ATP synthesis in the catalytic domain of F(1) is coupled via a rotary mechanism of the central stalk subunits to proton translocation. Component of the F(0) channel, it forms part of the peripheral stalk, linking F(1) to F(0). The chain is ATP synthase subunit b, chloroplastic from Piper cenocladum (Ant piper).